The following is a 179-amino-acid chain: Large ribosomal subunit protein uL6 (179 aa).

Belongs to the universal ribosomal protein uL6 family. In terms of assembly, part of the 50S ribosomal subunit.

This protein binds to the 23S rRNA, and is important in its secondary structure. It is located near the subunit interface in the base of the L7/L12 stalk, and near the tRNA binding site of the peptidyltransferase center. In Synechococcus elongatus (strain ATCC 33912 / PCC 7942 / FACHB-805) (Anacystis nidulans R2), this protein is Large ribosomal subunit protein uL6.